A 260-amino-acid chain; its full sequence is 5'-nucleotidase SurE (260 aa).

D13, D14, S44, and N102 together coordinate a divalent metal cation.

This sequence belongs to the SurE nucleotidase family. Requires a divalent metal cation as cofactor.

The protein resides in the cytoplasm. The enzyme catalyses a ribonucleoside 5'-phosphate + H2O = a ribonucleoside + phosphate. Its function is as follows. Nucleotidase that shows phosphatase activity on nucleoside 5'-monophosphates. The polypeptide is 5'-nucleotidase SurE (Christiangramia forsetii (strain DSM 17595 / CGMCC 1.15422 / KT0803) (Gramella forsetii)).